The primary structure comprises 1505 residues: ABC transporter C family member 13 (1505 aa).

12 consecutive transmembrane segments (helical) span residues 11–31 (EAAA…LLLL), 54–68 (AVDG…VGAW), 71–91 (AALA…SYEV), 102–122 (ALLL…LAMQ), 131–151 (FPVL…GIAY), 171–191 (MVAN…GVMG), 313–333 (AFAA…SYFV), 336–356 (LSGK…FFVA), 367–387 (WYLG…AMVY), 421–441 (AWYF…LAIL), 447–467 (IAMV…VPVA), and 534–554 (FVFW…CILL). One can recognise an ABC transmembrane type-1 1 domain in the interval 314–589 (FAAVNTIVSY…FPDLISMIAQ (276 aa)). An ABC transporter 1 domain is found at 623–846 (ININDATFSW…GTDFNALVCA (224 aa)). Residue 658 to 665 (GVIGSGKS) participates in ATP binding. Positions 881-897 (DNLKNKVSNNEKPSSTR) are enriched in polar residues. Residues 881 to 919 (DNLKNKVSNNEKPSSTRGIKEKKKKPEERKKKRSVQEEE) form a disordered region. A compositionally biased stretch (basic and acidic residues) spans 904 to 919 (KKPEERKKKRSVQEEE). Helical transmembrane passes span 940–960 (GTLI…QIAS), 980–1000 (SVVL…FVFV), 1055–1077 (IAFR…AVMS), 1081–1103 (WQVL…YYIA), 1149–1169 (LLDC…WLCL), and 1174–1194 (LSTF…PGTI). The 271-residue stretch at 945-1215 (LIILAQTMFQ…GLNLNARMSR (271 aa)) folds into the ABC transmembrane type-1 2 domain. The 235-residue stretch at 1262–1496 (IELVDLKVRY…KSSMFMQLVS (235 aa)) folds into the ABC transporter 2 domain. Residue 1296-1303 (GRTGSGKS) participates in ATP binding.

This sequence belongs to the ABC transporter superfamily. ABCC family. Conjugate transporter (TC 3.A.1.208) subfamily.

Its subcellular location is the membrane. In terms of biological role, ABC transporter that may affect phytic acid transport and compartmentalization. May function directly or indirectly in removing phytic acid from the cytosol or in vesicle trafficking. Required for phytic acid accumulation in developing seeds. Phytic acid is the primary storage form of phosphorus in cereal grains and other plant seeds. The protein is ABC transporter C family member 13 of Oryza sativa subsp. indica (Rice).